Here is a 120-residue protein sequence, read N- to C-terminus: UPF0102 protein CBU_1742 (120 aa).

This sequence belongs to the UPF0102 family.

This chain is UPF0102 protein CBU_1742, found in Coxiella burnetii (strain RSA 493 / Nine Mile phase I).